The sequence spans 1056 residues: Sucrose-phosphate synthase (1056 aa).

Positions 112-123 (HVERERGRREAT) are enriched in basic and acidic residues. A disordered region spans residues 112–132 (HVERERGRREATADMSEDLSE). 2 positions are modified to phosphoserine: serine 158 and serine 424. The tract at residues 681–700 (NWQRIDEGSENSDTDSAGDS) is disordered.

It belongs to the glycosyltransferase 1 family. As to quaternary structure, homodimer or homotetramer. Post-translationally, phosphorylated at Ser-158 and Ser-424.

The enzyme catalyses beta-D-fructose 6-phosphate + UDP-alpha-D-glucose = sucrose 6(F)-phosphate + UDP + H(+). The protein operates within glycan biosynthesis; sucrose biosynthesis; sucrose from D-fructose 6-phosphate and UDP-alpha-D-glucose: step 1/2. With respect to regulation, activity is regulated by phosphorylation and moderated by concentration of metabolites and light. Functionally, plays a role in photosynthetic sucrose synthesis by catalyzing the rate-limiting step of sucrose biosynthesis from UDP-glucose and fructose- 6-phosphate. Involved in the regulation of carbon partitioning in the leaves of plants. May regulate the synthesis of sucrose and therefore play a major role as a limiting factor in the export of photoassimilates out of the leaf. Plays a role for sucrose availability that is essential for plant growth and fiber elongation. This chain is Sucrose-phosphate synthase (SPS1), found in Spinacia oleracea (Spinach).